The following is a 305-amino-acid chain: Deoxyribonuclease gamma (305 aa).

The first 20 residues, 1-20, serve as a signal peptide directing secretion; that stretch reads MSRELAPLLLLLLSIHSALA. Positions 35–51 match the Bipartite nuclear localization signal motif; sequence KQEDKNAMDVIVKVIKR. Residues Glu-100 and His-155 contribute to the active site. The cysteines at positions 194 and 231 are disulfide-linked. Positions 284–305 are not required for free DNA-nuclease activity but required for activity towards liposome-coated DNA; sequence SRAFTNSKKSVTLRKKTKSKRS. The Nuclear localization signal motif lies at 296 to 304; it reads LRKKTKSKR.

Belongs to the DNase I family. The cofactor is Ca(2+). Mg(2+) is required as a cofactor. In terms of processing, poly-ADP-ribosylated by PARP1. ADP-ribosylation negatively regulates enzymatic activity during apoptosis. Liver and spleen.

Its subcellular location is the nucleus. It localises to the endoplasmic reticulum. The protein resides in the secreted. With respect to regulation, inhibited by zinc. Functionally, has DNA hydrolytic activity. Is capable of both single- and double-stranded DNA cleavage, producing DNA fragments with 3'-OH ends. Can cleave chromatin to nucleosomal units and cleaves nucleosomal and liposome-coated DNA. Acts in internucleosomal DNA fragmentation (INDF) during apoptosis and necrosis. The role in apoptosis includes myogenic and neuronal differentiation, and BCR-mediated clonal deletion of self-reactive B cells. Is active on chromatin in apoptotic cell-derived membrane-coated microparticles and thus suppresses anti-DNA autoimmunity. Together with DNASE1, plays a key role in degrading neutrophil extracellular traps (NETs). NETs are mainly composed of DNA fibers and are released by neutrophils to bind pathogens during inflammation. Degradation of intravascular NETs by DNASE1 and DNASE1L3 is required to prevent formation of clots that obstruct blood vessels and cause organ damage following inflammation. This chain is Deoxyribonuclease gamma, found in Homo sapiens (Human).